Consider the following 631-residue polypeptide: Squalene--hopene cyclase (631 aa).

3 PFTB repeats span residues 15–56 (LDRA…LDRV), 61–102 (MEKI…KYIG), and 241–282 (EIRA…QHPA). Asp-376 acts as the Proton donor in catalysis. 4 PFTB repeats span residues 400–441 (MTKG…GEVT), 468–508 (IRRA…KAVG), 516–557 (IQKA…SQTA), and 574–622 (ARRG…LALG).

This sequence belongs to the terpene cyclase/mutase family. Homodimer.

Its subcellular location is the cell membrane. The catalysed reaction is squalene = hop-22(29)-ene. It catalyses the reaction squalene + H2O = hopan-22-ol. Its pathway is secondary metabolite biosynthesis; hopanoid biosynthesis. Its function is as follows. Catalyzes the cyclization of squalene to two pentacyclic triterpenes, hop-22(29)-ene and hopan-22-ol (diplopterol); hopene and hopanol are formed at a constant ratio of 5:1. Is a key enzyme of hopanoid biosynthesis; hopanoids are components of the bacterial cytoplasmic membranes that play a vital role in stabilizing the membranes. The chain is Squalene--hopene cyclase (shc) from Alicyclobacillus acidocaldarius subsp. acidocaldarius (strain ATCC 27009 / DSM 446 / BCRC 14685 / JCM 5260 / KCTC 1825 / NBRC 15652 / NCIMB 11725 / NRRL B-14509 / 104-IA) (Bacillus acidocaldarius).